The sequence spans 48 residues: Large ribosomal subunit protein bL34 (48 aa).

It belongs to the bacterial ribosomal protein bL34 family.

The polypeptide is Large ribosomal subunit protein bL34 (rpmH) (Mycoplasma pneumoniae (strain ATCC 29342 / M129 / Subtype 1) (Mycoplasmoides pneumoniae)).